The sequence spans 75 residues: Small ribosomal subunit protein eS17 (75 aa).

This sequence belongs to the eukaryotic ribosomal protein eS17 family.

In Thermoplasma volcanium (strain ATCC 51530 / DSM 4299 / JCM 9571 / NBRC 15438 / GSS1), this protein is Small ribosomal subunit protein eS17.